We begin with the raw amino-acid sequence, 1517 residues long: Dual oxidase 2 (1517 aa).

Positions 1–25 (MLPTSLKTLVLLGALLTGPLGPAGG) are cleaved as a signal peptide. The Extracellular segment spans residues 26–599 (QDAPSLPREV…YFEGSGAGYG (574 aa)). Residues 30 to 596 (SLPREVQRYD…VIDYFEGSGA (567 aa)) form a peroxidase-like; mediates peroxidase activity region. 4 N-linked (GlcNAc...) asparagine glycosylation sites follow: N100, N348, N455, and N537. A disulfide bridge connects residues C124 and C1131. Residues 600-620 (VTLLAVCCFPVVSLIIAWVVA) traverse the membrane as a helical segment. Over 621-1010 (RFRNRERKML…KRFVENYRRH (390 aa)) the chain is Cytoplasmic. EF-hand domains follow at residues 819-854 (PQDMFVESMFSLADKDGNGYISFREFLDILVVFMKG), 855-890 (SPQDKSRLMFTMYDLDGNGFLSKEEFFTMMRSFIEI), and 899-934 (QLAEVVESMFRESGFQDKEELTWEDFHFMLRDHDSD). Ca(2+) contacts are provided by D832, D834, N836, Y838, E843, D868, D870, N872, and E879. Residues 960 to 1214 (RVSFLTRTPG…GSYALIQLPS (255 aa)) are interaction with TXNDC11. Residues 1011–1031 (IVCVTIFSAICAGLFADRAYY) traverse the membrane as a helical segment. The Extracellular portion of the chain corresponds to 1032–1046 (YGFASPPTDIEETTY). A helical transmembrane segment spans residues 1047 to 1067 (VGIILSRGTAASISFMFSYIL). The region spanning 1053 to 1235 (RGTAASISFM…YVGDKLVSLS (183 aa)) is the Ferric oxidoreductase domain. At 1068-1100 (LTMCRNLITFLRETFLNRYIPFDAAVDFHRWIA) the chain is on the cytoplasmic side. A helical transmembrane segment spans residues 1101-1121 (MAAVVLAVVHSLGHAVNVYIF). Residues 1122–1154 (SVSPLSLMTCVFPSVFVNDGSKLPPKYYWWFFE) lie on the Extracellular side of the membrane. Residues 1155 to 1175 (TVPGMTGVLLLLVLAIMYVFA) form a helical membrane-spanning segment. Topologically, residues 1176-1185 (SHHFRRHSFR) are cytoplasmic. Residues 1186–1206 (GFWLTHHLYVVLYALIIIHGS) form a helical membrane-spanning segment. Residue Y1207 is a topological domain, extracellular. Residues 1208–1228 (ALIQLPSFHIYFLVPAIIYVG) traverse the membrane as a helical segment. Residues 1229-1517 (DKLVSLSRKK…AHFVHHYENF (289 aa)) lie on the Cytoplasmic side of the membrane. The region spanning 1236 to 1342 (RKKVEISVVK…DGPFGEGHQE (107 aa)) is the FAD-binding FR-type domain.

The protein in the N-terminal section; belongs to the peroxidase family. Heterodimer with DUOXA2; disulfide-linked. Interacts with TXNDC11, TPO and CYBA. In terms of processing, N-glycosylated. Expressed in colon, duodenum, rectum and thyroid.

Its subcellular location is the apical cell membrane. It is found in the cell junction. It carries out the reaction NADH + O2 + H(+) = H2O2 + NAD(+). The enzyme catalyses NADPH + O2 + H(+) = H2O2 + NADP(+). It functions in the pathway hormone biosynthesis; thyroid hormone biosynthesis. The NADPH oxidase activity is calcium-dependent. Peroxidase activity is inhibited by aminobenzohydrazide. Its function is as follows. Generates hydrogen peroxide which is required for the activity of thyroid peroxidase/TPO and lactoperoxidase/LPO. Plays a role in thyroid hormones synthesis and lactoperoxidase-mediated antimicrobial defense at the surface of mucosa. May have its own peroxidase activity through its N-terminal peroxidase-like domain. In Rattus norvegicus (Rat), this protein is Dual oxidase 2 (Duox2).